We begin with the raw amino-acid sequence, 113 residues long: Defense protein 2 (113 aa).

Belongs to the attacin/sarcotoxin-2 family.

Its subcellular location is the secreted. In terms of biological role, has antibacterial activity against both Gram-positive and Gram-negative bacteria. The chain is Defense protein 2 from Lonomia obliqua (Moth).